Consider the following 2168-residue polypeptide: Genome polyprotein (2168 aa).

The tract at residues 1 to 20 (MGMQMSKNTAGSHTTVTQAS) is disordered. G2 carries N-myristoyl glycine; by host lipidation. Residues 2–1479 (GMQMSKNTAG…NVSIATTILS (1478 aa)) lie on the Cytoplasmic side of the membrane. Amphipathic alpha-helix regions lie at residues 551–567 (ALQA…ISSV) and 554–575 (APVE…TAQD). Residues 576-589 (TQPSSHNISTSETP) are compositionally biased toward polar residues. The tract at residues 576–607 (TQPSSHNISTSETPALQAAETGASSNASDEGM) is disordered. Residues H856 and D874 each act as for protease 2A activity in the active site. Residues C891 and C893 each contribute to the Zn(2+) site. C945 acts as the For protease 2A activity in catalysis. Residues C951 and H953 each contribute to the Zn(2+) site. Positions 1085-1157 (GDDWLKKFTS…EHSCPTTEQQ (73 aa)) are membrane-binding. Residues 1085-1223 (GDDWLKKFTS…TAGTGKSLAT (139 aa)) are oligomerization. An RNA-binding region spans residues 1106–1110 (AEKIM). An SF3 helicase domain is found at 1189–1347 (EKRILGYIQF…YKTHNGTLDV (159 aa)). C1354, C1365, and C1370 together coordinate Zn(2+). Residues 1354–1370 (CEDCCPANFKTCMPLIC) form a C4-type; degenerate zinc finger. Residues 1397 to 1404 (EWKRRNQV) form an RNA-binding region. Residues 1408–1413 (YVRLFQ) form an oligomerization region. The stretch at 1480–1495 (SLVLLTSVITLVYLVY) is an intramembrane region. Topologically, residues 1496 to 2168 (RLFAGYQGPY…SLLREWYEKF (673 aa)) are cytoplasmic. O-(5'-phospho-RNA)-tyrosine is present on Y1505. One can recognise a Peptidase C3 domain in the interval 1525-1703 (GPLMDFGVGM…FCAALKRSYF (179 aa)). Residues H1564, E1595, and C1671 each act as for protease 3C activity in the active site. The RdRp catalytic domain occupies 1934-2048 (GELFGFDYTA…ASYPYRIDPA (115 aa)). Residues D1940 and D2035 each coordinate Mg(2+).

The protein belongs to the picornaviruses polyprotein family. In terms of assembly, interacts with capsid protein VP1 and capsid protein VP3 to form heterotrimeric protomers. Interacts with capsid protein VP0, and capsid protein VP3 to form heterotrimeric protomers. Five protomers subsequently associate to form pentamers which serve as building blocks for the capsid. Interacts with capsid protein VP2, capsid protein VP3 and capsid protein VP4 following cleavage of capsid protein VP0. As to quaternary structure, interacts with capsid protein VP1 and capsid protein VP3 in the mature capsid. In terms of assembly, interacts with capsid protein VP0 and capsid protein VP1 to form heterotrimeric protomers. Five protomers subsequently associate to form pentamers which serve as building blocks for the capsid. Interacts with capsid protein VP4 in the mature capsid. Interacts with protein 2C; this interaction may be important for virion morphogenesis. Interacts with capsid protein VP1 and capsid protein VP3. As to quaternary structure, homodimer. In terms of assembly, homohexamer; forms a hexameric ring structure with 6-fold symmetry characteristic of AAA+ ATPases. Interacts (via N-terminus) with host RTN3 (via reticulon domain); this interaction is important for viral replication. Interacts with capsid protein VP3; this interaction may be important for virion morphogenesis. Interacts with protein 3CD. As to quaternary structure, homodimer. Interacts with host GBF1. Interacts (via GOLD domain) with host ACBD3 (via GOLD domain); this interaction allows the formation of a viral protein 3A/ACBD3 heterotetramer with a 2:2 stoichiometry, which will stimulate the recruitment of host PI4KB in order to synthesize PI4P at the viral RNA replication sites. In terms of assembly, interacts with RNA-directed RNA polymerase. Interacts with protein 3AB and with RNA-directed RNA polymerase. As to quaternary structure, interacts with Viral protein genome-linked and with protein 3CD. The cofactor is Mg(2+). Post-translationally, specific enzymatic cleavages in vivo by the viral proteases yield processing intermediates and the mature proteins. Myristoylation is required for the formation of pentamers during virus assembly. Further assembly of 12 pentamers and a molecule of genomic RNA generates the provirion. In terms of processing, during virion maturation, immature virions are rendered infectious following cleavage of VP0 into VP4 and VP2. This maturation seems to be an autocatalytic event triggered by the presence of RNA in the capsid and it is followed by a conformational change infectious virion. Post-translationally, myristoylation is required during RNA encapsidation and formation of the mature virus particle. VPg is uridylylated by the polymerase into VPg-pUpU. This acts as a nucleotide-peptide primer for the genomic RNA replication.

Its subcellular location is the virion. It is found in the host cytoplasm. The protein resides in the host cytoplasmic vesicle membrane. It localises to the host nucleus. It catalyses the reaction a ribonucleoside 5'-triphosphate + H2O = a ribonucleoside 5'-diphosphate + phosphate + H(+). The catalysed reaction is Selective cleavage of Tyr-|-Gly bond in the picornavirus polyprotein.. It carries out the reaction RNA(n) + a ribonucleoside 5'-triphosphate = RNA(n+1) + diphosphate. The enzyme catalyses Selective cleavage of Gln-|-Gly bond in the poliovirus polyprotein. In other picornavirus reactions Glu may be substituted for Gln, and Ser or Thr for Gly.. Replication or transcription is subject to high level of random mutations by the nucleotide analog ribavirin. Forms an icosahedral capsid of pseudo T=3 symmetry with capsid proteins VP2 and VP3. The capsid is 300 Angstroms in diameter, composed of 60 copies of each capsid protein and enclosing the viral positive strand RNA genome. Capsid protein VP1 mainly forms the vertices of the capsid. Capsid protein VP1 interacts with host cell receptor to provide virion attachment to target host cells. This attachment induces virion internalization. Tyrosine kinases are probably involved in the entry process. After binding to its receptor, the capsid undergoes conformational changes. Capsid protein VP1 N-terminus (that contains an amphipathic alpha-helix) and capsid protein VP4 are externalized. Together, they shape a pore in the host membrane through which viral genome is translocated to host cell cytoplasm. Functionally, forms an icosahedral capsid of pseudo T=3 symmetry with capsid proteins VP2 and VP3. The capsid is 300 Angstroms in diameter, composed of 60 copies of each capsid protein and enclosing the viral positive strand RNA genome. In terms of biological role, lies on the inner surface of the capsid shell. After binding to the host receptor, the capsid undergoes conformational changes. Capsid protein VP4 is released, Capsid protein VP1 N-terminus is externalized, and together, they shape a pore in the host membrane through which the viral genome is translocated into the host cell cytoplasm. Its function is as follows. Component of immature procapsids, which is cleaved into capsid proteins VP4 and VP2 after maturation. Allows the capsid to remain inactive before the maturation step. Cysteine protease that cleaves viral polyprotein and specific host proteins. It is responsible for the autocatalytic cleavage between the P1 and P2 regions, which is the first cleavage occurring in the polyprotein. Also cleaves the host translation initiation factor EIF4G1, in order to shut down the capped cellular mRNA translation. Inhibits the host nucleus-cytoplasm protein and RNA trafficking by cleaving host members of the nuclear pores. Counteracts stress granule formation probably by antagonizing its assembly or promoting its dissassembly. Functionally, plays an essential role in the virus replication cycle by acting as a viroporin. Creates a pore in the host endoplasmic reticulum and as a consequence releases Ca2+ in the cytoplasm of infected cell. In turn, high levels of cytoplasmic calcium may trigger membrane trafficking and transport of viral ER-associated proteins to viroplasms, sites of viral genome replication. In terms of biological role, induces and associates with structural rearrangements of intracellular membranes. Displays RNA-binding, nucleotide binding and NTPase activities. May play a role in virion morphogenesis and viral RNA encapsidation by interacting with the capsid protein VP3. Its function is as follows. Localizes the viral replication complex to the surface of membranous vesicles. Together with protein 3CD binds the Cis-Active RNA Element (CRE) which is involved in RNA synthesis initiation. Acts as a cofactor to stimulate the activity of 3D polymerase, maybe through a nucleid acid chaperone activity. Localizes the viral replication complex to the surface of membranous vesicles. It inhibits host cell endoplasmic reticulum-to-Golgi apparatus transport and causes the disassembly of the Golgi complex, possibly through GBF1 interaction. This would result in depletion of MHC, trail receptors and IFN receptors at the host cell surface. Plays an essential role in viral RNA replication by recruiting ACBD3 and PI4KB at the viral replication sites, thereby allowing the formation of the rearranged membranous structures where viral replication takes place. Functionally, acts as a primer for viral RNA replication and remains covalently bound to viral genomic RNA. VPg is uridylylated prior to priming replication into VPg-pUpU. The oriI viral genomic sequence may act as a template for this. The VPg-pUpU is then used as primer on the genomic RNA poly(A) by the RNA-dependent RNA polymerase to replicate the viral genome. During genome replication, the VPg-RNA linkage is removed by the host TDP2, thereby accelerating replication. During the late stage of the replication cycle, host TDP2 is excluded from sites of viral RNA synthesis and encapsidation, allowing for the generation of progeny virions. In terms of biological role, involved in the viral replication complex and viral polypeptide maturation. It exhibits protease activity with a specificity and catalytic efficiency that is different from protease 3C. Protein 3CD lacks polymerase activity. Protein 3CD binds to the 5'UTR of the viral genome. Its function is as follows. Replicates the viral genomic RNA on the surface of intracellular membranes. May form linear arrays of subunits that propagate along a strong head-to-tail interaction called interface-I. Covalently attaches UMP to a tyrosine of VPg, which is used to prime RNA synthesis. The positive stranded RNA genome is first replicated at virus induced membranous vesicles, creating a dsRNA genomic replication form. This dsRNA is then used as template to synthesize positive stranded RNA genomes. ss(+)RNA genomes are either translated, replicated or encapsidated. Major viral protease that mediates proteolytic processing of the polyprotein. Cleaves host EIF5B, contributing to host translation shutoff. Also cleaves host PABPC1, contributing to host translation shutoff. Cleaves host NLRP1, triggers host N-glycine-mediated degradation of the autoinhibitory NLRP1 N-terminal fragment. In Sus scrofa (Pig), this protein is Genome polyprotein.